The primary structure comprises 275 residues: Transmembrane protein 45A (275 aa).

The next 5 helical transmembrane spans lie at 7–27 (HALPGTFFFIIGLWWCTKSIL), 51–71 (ILEGITIVGMALTGMAGEQFI), 100–120 (FFFGLLGVADILCFTISSLPV), 150–170 (IFVHQLLVLVVFLTGLVAFLE), and 218–238 (ILFLTICFCWHYAVTIVIVGM).

This sequence belongs to the TMEM45 family.

It localises to the membrane. The sequence is that of Transmembrane protein 45A (TMEM45A) from Homo sapiens (Human).